The following is a 356-amino-acid chain: Nicotinate-nucleotide--dimethylbenzimidazole phosphoribosyltransferase (356 aa).

Glu317 acts as the Proton acceptor in catalysis.

The protein belongs to the CobT family. Homodimer.

It catalyses the reaction 5,6-dimethylbenzimidazole + nicotinate beta-D-ribonucleotide = alpha-ribazole 5'-phosphate + nicotinate + H(+). The protein operates within nucleoside biosynthesis; alpha-ribazole biosynthesis; alpha-ribazole from 5,6-dimethylbenzimidazole: step 1/2. Functionally, catalyzes the synthesis of alpha-ribazole-5'-phosphate from nicotinate mononucleotide (NAMN) and 5,6-dimethylbenzimidazole (DMB). The chain is Nicotinate-nucleotide--dimethylbenzimidazole phosphoribosyltransferase from Salmonella gallinarum (strain 287/91 / NCTC 13346).